A 169-amino-acid chain; its full sequence is Ribosome maturation factor RimM (169 aa).

The PRC barrel domain occupies 93–167 (PENSFFISDI…KISVILPKGL (75 aa)).

It belongs to the RimM family. As to quaternary structure, binds ribosomal protein uS19.

The protein resides in the cytoplasm. Its function is as follows. An accessory protein needed during the final step in the assembly of 30S ribosomal subunit, possibly for assembly of the head region. Essential for efficient processing of 16S rRNA. May be needed both before and after RbfA during the maturation of 16S rRNA. It has affinity for free ribosomal 30S subunits but not for 70S ribosomes. This is Ribosome maturation factor RimM from Ruminiclostridium cellulolyticum (strain ATCC 35319 / DSM 5812 / JCM 6584 / H10) (Clostridium cellulolyticum).